Here is a 432-residue protein sequence, read N- to C-terminus: Histidine--tRNA ligase (432 aa).

It belongs to the class-II aminoacyl-tRNA synthetase family. As to quaternary structure, homodimer.

It localises to the cytoplasm. The enzyme catalyses tRNA(His) + L-histidine + ATP = L-histidyl-tRNA(His) + AMP + diphosphate + H(+). The sequence is that of Histidine--tRNA ligase from Symbiobacterium thermophilum (strain DSM 24528 / JCM 14929 / IAM 14863 / T).